The primary structure comprises 65 residues: Toxin VmKTx1 (65 aa).

Positions 1–21 (MKTSCLLTILLLSFLVAVAVA) are cleaved as a signal peptide. The propeptide occupies 22–28 (EGERSAR). 4 disulfides stabilise this stretch: cysteine 34/cysteine 54, cysteine 40/cysteine 59, cysteine 44/cysteine 61, and cysteine 49/cysteine 64. At cysteine 64 the chain carries Cysteine amide.

It belongs to the short scorpion toxin superfamily. Potassium channel inhibitor family. Alpha-KTx 23 subfamily. In terms of tissue distribution, expressed by the venom gland.

The protein localises to the secreted. Voltage-gated potassium channel inhibitor. Selectively and reversibly binds (Kd=0.77 nM) and blocks hKv1.3/KCNA3 potassium channels of human T-lymphocytes. Also shows a very weak effect on hKv1.2/KCNA2 (Kd=7.1 uM). Also reduces the fraction of CD40L expressing T cells that are stimulated by alphaCD3/alphaCD28. In Vaejovis mexicanus smithi (Mexican scorpion), this protein is Toxin VmKTx1.